Consider the following 707-residue polypeptide: MSTLDLFASPTPAPMPPASVIERIAALRAELDLHAHRYYVLDEPSIPDAEYDRLFKELQALEAAHPELLTPDSPTQRVGGKPLGQFASVRHRIPMLSIRTETDTEATGARNFDTRVRKELGLKESDPPVEYVAELKFDGLAMSLRYENGVLVQAATRGDGEVGEDVTQNIRTIRQIPLRLPADAPPVMEVRGEVYMRRDEFEALNERQREKIAKGAKGEKTFVNPRNAAAGGVRQLDPAFAAERRLSFFAYGVGEITPPEEGGPVFETHFELLQTLKSWCFPVAAQTRLAYGAPELIAFHEAIGRQRDQLPYDIDGVVYKVNSLALQRKMGFVSREPRWAVAHKYPAQEQLTTVLAIDIQVGRTGKLTPVAKLAPVFVGGVTVTNATLHNEDEARRKDVRVGDTVIVRRAGDVIPEVVSVLLDKRVQDAPQFSMPRQCPVCGSDAVREEGEADYRCTGGLFCAAQRKEAILHYAHKRAVEIEGLGDKLVEQLVDTGVIRTLPDLYRLGFTSLASLDRMAEKSASNLVAALEKSKQTTLPRFVFGLGIRHVGEATAKALARHFGQLDSIMDASEEQLLEVADVGPIVAKSIRTFFEQPHNREVVEQLRACGVTWEEGAPAAVAPKPLSGKTFVITGTLPGLSRDDAKDRIEAAGGKVAGSVSKKTDYVVAGLDAGSKLVKAEALGVAVIDEATLLALLDSPPDERIPA.

NAD(+) is bound by residues 48–52, 97–98, and glutamate 134; these read DAEYD and SI. Lysine 136 serves as the catalytic N6-AMP-lysine intermediate. 4 residues coordinate NAD(+): arginine 157, glutamate 193, lysine 320, and lysine 344. 4 residues coordinate Zn(2+): cysteine 438, cysteine 441, cysteine 456, and cysteine 462. Positions 621–707 constitute a BRCT domain; the sequence is VAPKPLSGKT…DSPPDERIPA (87 aa).

This sequence belongs to the NAD-dependent DNA ligase family. LigA subfamily. Mg(2+) is required as a cofactor. Mn(2+) serves as cofactor.

The catalysed reaction is NAD(+) + (deoxyribonucleotide)n-3'-hydroxyl + 5'-phospho-(deoxyribonucleotide)m = (deoxyribonucleotide)n+m + AMP + beta-nicotinamide D-nucleotide.. Functionally, DNA ligase that catalyzes the formation of phosphodiester linkages between 5'-phosphoryl and 3'-hydroxyl groups in double-stranded DNA using NAD as a coenzyme and as the energy source for the reaction. It is essential for DNA replication and repair of damaged DNA. The protein is DNA ligase of Polaromonas naphthalenivorans (strain CJ2).